We begin with the raw amino-acid sequence, 328 residues long: Glycerol-3-phosphate dehydrogenase [NAD(P)+] (328 aa).

The NADPH site is built by Trp-15, Arg-35, and Lys-108. Residues Lys-108, Gly-136, and Ser-138 each coordinate sn-glycerol 3-phosphate. Ala-140 contributes to the NADPH binding site. Residues Lys-191, Asp-244, Ser-254, Arg-255, and Asn-256 each coordinate sn-glycerol 3-phosphate. Lys-191 acts as the Proton acceptor in catalysis. An NADPH-binding site is contributed by Arg-255. 2 residues coordinate NADPH: Leu-275 and Glu-277.

The protein belongs to the NAD-dependent glycerol-3-phosphate dehydrogenase family.

It localises to the cytoplasm. The enzyme catalyses sn-glycerol 3-phosphate + NAD(+) = dihydroxyacetone phosphate + NADH + H(+). The catalysed reaction is sn-glycerol 3-phosphate + NADP(+) = dihydroxyacetone phosphate + NADPH + H(+). It participates in membrane lipid metabolism; glycerophospholipid metabolism. Catalyzes the reduction of the glycolytic intermediate dihydroxyacetone phosphate (DHAP) to sn-glycerol 3-phosphate (G3P), the key precursor for phospholipid synthesis. The polypeptide is Glycerol-3-phosphate dehydrogenase [NAD(P)+] (Azorhizobium caulinodans (strain ATCC 43989 / DSM 5975 / JCM 20966 / LMG 6465 / NBRC 14845 / NCIMB 13405 / ORS 571)).